A 376-amino-acid chain; its full sequence is Fructose-1,6-bisphosphate aldolase/phosphatase (376 aa).

The Proton acceptor; for FBP phosphatase activity role is filled by aspartate 11. Mg(2+) contacts are provided by aspartate 11, histidine 18, aspartate 49, and aspartate 50. Histidine 18 contributes to the beta-D-fructose 1,6-bisphosphate binding site. Dihydroxyacetone phosphate is bound at residue histidine 18. Position 87 (tyrosine 87) interacts with beta-D-fructose 1,6-bisphosphate. Glutamine 91 contributes to the Mg(2+) binding site. 100–101 (GN) lines the beta-D-fructose 1,6-bisphosphate pocket. Aspartate 128 lines the Mg(2+) pocket. Lysine 129 serves as a coordination point for beta-D-fructose 1,6-bisphosphate. A dihydroxyacetone phosphate-binding site is contributed by lysine 129. Catalysis depends on tyrosine 224, which acts as the Proton donor/acceptor; for FBP aldolase activity. Mg(2+) contacts are provided by lysine 227, aspartate 228, and aspartate 229. The active-site Schiff-base intermediate with DHAP; for FBP aldolase activity is the lysine 227. Residues 237-238 (QK), arginine 261, and tyrosine 342 contribute to the beta-D-fructose 1,6-bisphosphate site. Arginine 261 contributes to the dihydroxyacetone phosphate binding site. Residues 357-376 (MVPLKDSGPAGTGRAYEDPD) form a disordered region.

This sequence belongs to the FBP aldolase/phosphatase family. As to quaternary structure, homooctamer; dimer of tetramers. The cofactor is Mg(2+).

It catalyses the reaction beta-D-fructose 1,6-bisphosphate + H2O = beta-D-fructose 6-phosphate + phosphate. The catalysed reaction is beta-D-fructose 1,6-bisphosphate = D-glyceraldehyde 3-phosphate + dihydroxyacetone phosphate. The protein operates within carbohydrate biosynthesis; gluconeogenesis. In terms of biological role, catalyzes two subsequent steps in gluconeogenesis: the aldol condensation of dihydroxyacetone phosphate (DHAP) and glyceraldehyde-3-phosphate (GA3P) to fructose-1,6-bisphosphate (FBP), and the dephosphorylation of FBP to fructose-6-phosphate (F6P). The sequence is that of Fructose-1,6-bisphosphate aldolase/phosphatase from Cenarchaeum symbiosum (strain A).